The primary structure comprises 205 residues: MSVNNEVSADQHNPELEDDTFEHGPPVSLGEKKSLNEYMKMDAEDESLQKWKASLGITGTGYSPSNDRRTVVILKLSLLVDGRDPVDVNMEDAASVEQIRKKGFTIKEGSEFKIGVKFRVQHEVISGLRYVQTVRRRGFVVDKTSTMIGSYGPSETPYDFTSEPDEAPTGMLARGHYEANGKFVDDDKVVHHEFVWAFDVAKSWK.

Over residues 1–11 the composition is skewed to polar residues; sequence MSVNNEVSADQ. Residues 1-31 are disordered; sequence MSVNNEVSADQHNPELEDDTFEHGPPVSLGE. The residue at position 63 (Ser63) is a Phosphoserine.

This sequence belongs to the Rho GDI family.

The protein localises to the cytoplasm. It localises to the nucleus. In terms of biological role, regulates the GDP/GTP exchange reaction of the Rho proteins by inhibiting the dissociation of GDP from them, and the subsequent binding of GTP to them. This is Rho GDP-dissociation inhibitor from Schizosaccharomyces pombe (strain 972 / ATCC 24843) (Fission yeast).